A 191-amino-acid chain; its full sequence is Oleosin 20.3 kDa (191 aa).

Alanine 2 bears the N-acetylalanine mark. A polar region spans residues 2–54 (ANVDRDRRVHVDRTDKRVHQPNYEDDVGFGGYGGYGAGSDYKSRGPSTNQILA). 2 helical membrane-spanning segments follow: residues 52-72 (ILAL…AGLT) and 99-119 (LTIG…LTGL). Positions 55–128 (LIAGVPIGGT…LSSVSWVLNY (74 aa)) are hydrophobic.

Belongs to the oleosin family.

It is found in the lipid droplet. It localises to the membrane. Functionally, may have a structural role to stabilize the lipid body during desiccation of the seed by preventing coalescence of the oil. Probably interacts with both lipid and phospholipid moieties of lipid bodies. May also provide recognition signals for specific lipase anchorage in lipolysis during seedling growth. The protein is Oleosin 20.3 kDa (OL2) of Arabidopsis thaliana (Mouse-ear cress).